Reading from the N-terminus, the 128-residue chain is uncharacterized protein (128 aa).

3 helical membrane-spanning segments follow: residues 13 to 35 (FQMA…VFFV), 42 to 64 (IIAL…YNGG), and 90 to 112 (LVLT…SIIL).

The protein localises to the cell membrane. This is an uncharacterized protein from Methanocaldococcus jannaschii (strain ATCC 43067 / DSM 2661 / JAL-1 / JCM 10045 / NBRC 100440) (Methanococcus jannaschii).